Here is a 584-residue protein sequence, read N- to C-terminus: Breast carcinoma-amplified sequence 1 (584 aa).

3 disordered regions span residues 1-29 (MGNQMSVPQRVEDQENEPEAETYQDNASA), 59-280 (VATS…AAAI), and 297-377 (PNKA…GKLF). 2 stretches are compositionally biased toward polar residues: residues 59-69 (VATSSPETTEI) and 112-128 (ADSSLGSVKLDVSSNKA). Ser-124 and Ser-192 each carry phosphoserine. 3 stretches are compositionally biased toward basic and acidic residues: residues 186 to 226 (SKPK…KVDE), 238 to 252 (PAGKDIVDGKEKEGQ), and 300 to 311 (AETKKDPEDTGA). Ser-314 carries the phosphoserine modification. Residues 314-354 (SPTTSADLKSDKANFTSQETQGAGKNSKGCNPSGHTQSVTT) show a composition bias toward polar residues. Residues 357–366 (PAKEGTKEKS) are compositionally biased toward basic and acidic residues. Phosphoserine occurs at positions 381 and 399. A disordered region spans residues 415 to 584 (TVDLNEGDAA…VSIGPVGKSK (170 aa)). Residues 428–439 (TEAKLKREESKP) are compositionally biased toward basic and acidic residues. Residue Thr-480 is modified to Phosphothreonine. The span at 494 to 506 (KGKEGSSKDKKSA) shows a compositional bias: basic and acidic residues. Residues 525 to 540 (CTEQATVDTNSLQNGD) show a composition bias toward polar residues. A compositionally biased stretch (basic and acidic residues) spans 541 to 550 (KLQKRPEKRQ). Ser-552 is modified (phosphoserine). Residues 565 to 584 (MLDAQVQTDPVSIGPVGKSK) are interacts with DYNLL1 and DYNLL2.

As to quaternary structure, homodimer. Interacts with DYNLL1 and DYNLL2. As to expression, highly expressed in the brain and, more specifically, in oligodendrocytes (at protein level). Expressed in the prostate, and at lower levels in testis, intestine and colon. Overexpressed in most breast cancer cell lines and down-regulated in some colorectal tumors.

The protein resides in the cytoplasm. Its function is as follows. Required for myelination. This Homo sapiens (Human) protein is Breast carcinoma-amplified sequence 1 (BCAS1).